A 597-amino-acid chain; its full sequence is Elongation factor 4 (597 aa).

Residues Lys-2–Ala-184 form the tr-type G domain. GTP contacts are provided by residues Asp-14–Thr-19 and Asn-131–Asp-134.

This sequence belongs to the TRAFAC class translation factor GTPase superfamily. Classic translation factor GTPase family. LepA subfamily.

The protein resides in the cell inner membrane. It catalyses the reaction GTP + H2O = GDP + phosphate + H(+). Required for accurate and efficient protein synthesis under certain stress conditions. May act as a fidelity factor of the translation reaction, by catalyzing a one-codon backward translocation of tRNAs on improperly translocated ribosomes. Back-translocation proceeds from a post-translocation (POST) complex to a pre-translocation (PRE) complex, thus giving elongation factor G a second chance to translocate the tRNAs correctly. Binds to ribosomes in a GTP-dependent manner. The chain is Elongation factor 4 from Neisseria meningitidis serogroup A / serotype 4A (strain DSM 15465 / Z2491).